The following is a 369-amino-acid chain: Tryptophan 2,3-dioxygenase 2 (369 aa).

Residues 36-40 (FIVVH) and Arg-107 each bind substrate. His-303 provides a ligand contact to heme. Substrate is bound at residue Thr-317.

The protein belongs to the tryptophan 2,3-dioxygenase family. Homotetramer. The cofactor is heme.

The enzyme catalyses L-tryptophan + O2 = N-formyl-L-kynurenine. It participates in amino-acid degradation; L-tryptophan degradation via kynurenine pathway; L-kynurenine from L-tryptophan: step 1/2. In terms of biological role, heme-dependent dioxygenase that catalyzes the oxidative cleavage of the L-tryptophan (L-Trp) pyrrole ring and converts L-tryptophan to N-formyl-L-kynurenine. Catalyzes the oxidative cleavage of the indole moiety. The chain is Tryptophan 2,3-dioxygenase 2 from Ralstonia nicotianae (strain ATCC BAA-1114 / GMI1000) (Ralstonia solanacearum).